The sequence spans 301 residues: Cytosolic sulfotransferase 2 (301 aa).

53-58 (KAGTTW) contributes to the 3'-phosphoadenylyl sulfate binding site. His115 acts as the Proton acceptor in catalysis. 3'-phosphoadenylyl sulfate contacts are provided by residues Arg137, Ser145, Tyr201, 235 to 240 (VQFDVM), and 263 to 265 (RKG).

Belongs to the sulfotransferase 1 family. Expressed in liver.

Its subcellular location is the cytoplasm. Inhibited by Co(2+), Zn(2+), Cd(2+) and Pb(2+) ions. Inactivated by Hg(2+) and Cu(2+) ions. In terms of biological role, sulfotransferase that utilizes 3'-phospho-5'-adenylyl sulfate (PAPS) as sulfonate donor to catalyze the sulfate conjugation of a variety of xenobiotic and endogenous compounds, including 2-naphthol, hydroxychlorobiphenyls, T3 (triiodo-L-thyronine), T4 (thyroxine), estrone and DOPA. The sequence is that of Cytosolic sulfotransferase 2 from Danio rerio (Zebrafish).